The chain runs to 235 residues: Putative quercetin 2,3-dioxygenase ZMO1337 (235 aa).

Residues H57, H59, H101, and E103 each contribute to the a divalent metal cation site.

This sequence belongs to the pirin family. Requires a divalent metal cation as cofactor.

The enzyme catalyses quercetin + O2 = 2-(3,4-dihydroxybenzoyloxy)-4,6-dihydroxybenzoate + CO. Its pathway is flavonoid metabolism; quercetin degradation. Its function is as follows. Putative quercetin 2,3-dioxygenase. This is Putative quercetin 2,3-dioxygenase ZMO1337 from Zymomonas mobilis subsp. mobilis (strain ATCC 31821 / ZM4 / CP4).